We begin with the raw amino-acid sequence, 87 residues long: Protein WFDC11 (87 aa).

The signal sequence occupies residues 1-25; it reads MVSLMKLWIPMLMTFFCTVLLSVLG.

The protein resides in the secreted. This Homo sapiens (Human) protein is Protein WFDC11 (WFDC11).